Consider the following 452-residue polypeptide: uncharacterized protein (452 aa).

Helical transmembrane passes span 18-38 (PIIE…VLAK), 81-101 (LLPV…FLLA), 269-289 (IVLL…ALFI), 317-337 (AGQV…ATDI), 354-374 (VIIV…LPAF), 390-410 (VFVV…LTQI), and 428-448 (SYAV…LLVV).

This sequence belongs to the auxin efflux carrier (TC 2.A.69) family.

The protein localises to the membrane. This is an uncharacterized protein from Schizosaccharomyces pombe (strain 972 / ATCC 24843) (Fission yeast).